Here is a 280-residue protein sequence, read N- to C-terminus: Large ribosomal subunit protein uL2cz/uL2cy (280 aa).

Disordered stretches follow at residues 1–25 (MAIHLYKTSTPSTRNGAVDSQVKSN) and 231–280 (PVDH…RRTK).

The protein belongs to the universal ribosomal protein uL2 family. In terms of assembly, part of the 50S ribosomal subunit.

It is found in the plastid. The protein resides in the chloroplast. The protein is Large ribosomal subunit protein uL2cz/uL2cy (rpl2-A) of Platanus occidentalis (Sycamore).